The chain runs to 104 residues: MAAKIRRDDEVIVLTGKDKGKRGKVKNVLSSGKVIVEGINLVKKHQKPVPALNQPGGIVEKEAAIQISNLAIFNAATGKADRVGFRFEDGKKVRFFKSNSETIK.

Belongs to the universal ribosomal protein uL24 family. Part of the 50S ribosomal subunit.

One of two assembly initiator proteins, it binds directly to the 5'-end of the 23S rRNA, where it nucleates assembly of the 50S subunit. In terms of biological role, one of the proteins that surrounds the polypeptide exit tunnel on the outside of the subunit. This chain is Large ribosomal subunit protein uL24, found in Klebsiella pneumoniae (strain 342).